A 132-amino-acid chain; its full sequence is MSLGWLEDVAWNKEGLIPAIAQEDRTGQVLMLAWMNREALETTVQSGYAVYWSRSRKRLWRKGEQSGHEQIIKAIHLDCDSDAVLLLVEQKGGMACHTGRHRCFFKRLEKGNWASVEPVLKSPDSIYNNSDE.

Residue Asp-78 participates in Mg(2+) binding. Zn(2+) is bound at residue Cys-79. Mg(2+)-binding residues include Asp-80 and Asp-82. Zn(2+)-binding residues include Cys-96 and Cys-103.

It belongs to the PRA-CH family. As to quaternary structure, homodimer. It depends on Mg(2+) as a cofactor. Zn(2+) is required as a cofactor.

It localises to the cytoplasm. The enzyme catalyses 1-(5-phospho-beta-D-ribosyl)-5'-AMP + H2O = 1-(5-phospho-beta-D-ribosyl)-5-[(5-phospho-beta-D-ribosylamino)methylideneamino]imidazole-4-carboxamide. The protein operates within amino-acid biosynthesis; L-histidine biosynthesis; L-histidine from 5-phospho-alpha-D-ribose 1-diphosphate: step 3/9. Functionally, catalyzes the hydrolysis of the adenine ring of phosphoribosyl-AMP. The protein is Phosphoribosyl-AMP cyclohydrolase of Nitrosococcus oceani (strain ATCC 19707 / BCRC 17464 / JCM 30415 / NCIMB 11848 / C-107).